A 284-amino-acid chain; its full sequence is Bifunctional protein FolD (284 aa).

NADP(+) is bound by residues 166 to 168 and Ile232; that span reads GAS.

It belongs to the tetrahydrofolate dehydrogenase/cyclohydrolase family. In terms of assembly, homodimer.

The enzyme catalyses (6R)-5,10-methylene-5,6,7,8-tetrahydrofolate + NADP(+) = (6R)-5,10-methenyltetrahydrofolate + NADPH. The catalysed reaction is (6R)-5,10-methenyltetrahydrofolate + H2O = (6R)-10-formyltetrahydrofolate + H(+). Its pathway is one-carbon metabolism; tetrahydrofolate interconversion. In terms of biological role, catalyzes the oxidation of 5,10-methylenetetrahydrofolate to 5,10-methenyltetrahydrofolate and then the hydrolysis of 5,10-methenyltetrahydrofolate to 10-formyltetrahydrofolate. In Shewanella baltica (strain OS223), this protein is Bifunctional protein FolD.